A 310-amino-acid polypeptide reads, in one-letter code: Homoserine kinase (310 aa).

91 to 101 (PIGSGLGSSAC) serves as a coordination point for ATP.

It belongs to the GHMP kinase family. Homoserine kinase subfamily.

It is found in the cytoplasm. It catalyses the reaction L-homoserine + ATP = O-phospho-L-homoserine + ADP + H(+). Its pathway is amino-acid biosynthesis; L-threonine biosynthesis; L-threonine from L-aspartate: step 4/5. Its function is as follows. Catalyzes the ATP-dependent phosphorylation of L-homoserine to L-homoserine phosphate. The protein is Homoserine kinase of Escherichia coli O17:K52:H18 (strain UMN026 / ExPEC).